The primary structure comprises 293 residues: Ribosomal RNA small subunit methyltransferase A (293 aa).

S-adenosyl-L-methionine contacts are provided by N33, V35, G60, E81, D111, and N130.

It belongs to the class I-like SAM-binding methyltransferase superfamily. rRNA adenine N(6)-methyltransferase family. RsmA subfamily.

It is found in the cytoplasm. It carries out the reaction adenosine(1518)/adenosine(1519) in 16S rRNA + 4 S-adenosyl-L-methionine = N(6)-dimethyladenosine(1518)/N(6)-dimethyladenosine(1519) in 16S rRNA + 4 S-adenosyl-L-homocysteine + 4 H(+). Its function is as follows. Specifically dimethylates two adjacent adenosines (A1518 and A1519) in the loop of a conserved hairpin near the 3'-end of 16S rRNA in the 30S particle. May play a critical role in biogenesis of 30S subunits. This is Ribosomal RNA small subunit methyltransferase A from Corynebacterium glutamicum (strain ATCC 13032 / DSM 20300 / JCM 1318 / BCRC 11384 / CCUG 27702 / LMG 3730 / NBRC 12168 / NCIMB 10025 / NRRL B-2784 / 534).